Here is a 514-residue protein sequence, read N- to C-terminus: UDP-N-acetylmuramate--L-alanine ligase (514 aa).

127 to 133 is a binding site for ATP; the sequence is GTHGKTT. Low complexity predominate over residues 495–505; it reads IGGTIPDIPGG. Positions 495–514 are disordered; sequence IGGTIPDIPGGSTPDASAAG.

The protein belongs to the MurCDEF family.

The protein resides in the cytoplasm. The enzyme catalyses UDP-N-acetyl-alpha-D-muramate + L-alanine + ATP = UDP-N-acetyl-alpha-D-muramoyl-L-alanine + ADP + phosphate + H(+). It participates in cell wall biogenesis; peptidoglycan biosynthesis. Functionally, cell wall formation. This chain is UDP-N-acetylmuramate--L-alanine ligase, found in Salinispora tropica (strain ATCC BAA-916 / DSM 44818 / JCM 13857 / NBRC 105044 / CNB-440).